Here is a 278-residue protein sequence, read N- to C-terminus: Protoheme IX farnesyltransferase (278 aa).

Transmembrane regions (helical) follow at residues 12-32 (VIWL…QTVD), 33-53 (WSKL…SAAF), 83-103 (ALVY…YLLG), 105-125 (LPGL…TIWL), 130-150 (WLNI…GYAL), 157-177 (LPAV…IWAL), 204-224 (VIIS…YLAF), 228-248 (LLGL…SILA), and 257-277 (MWKM…ALVF).

This sequence belongs to the UbiA prenyltransferase family. Protoheme IX farnesyltransferase subfamily.

It is found in the cell membrane. It catalyses the reaction heme b + (2E,6E)-farnesyl diphosphate + H2O = Fe(II)-heme o + diphosphate. Its pathway is porphyrin-containing compound metabolism; heme O biosynthesis; heme O from protoheme: step 1/1. Converts heme B (protoheme IX) to heme O by substitution of the vinyl group on carbon 2 of heme B porphyrin ring with a hydroxyethyl farnesyl side group. This Pyrobaculum islandicum (strain DSM 4184 / JCM 9189 / GEO3) protein is Protoheme IX farnesyltransferase.